A 341-amino-acid polypeptide reads, in one-letter code: Methionine import ATP-binding protein MetN (341 aa).

The 239-residue stretch at 9 to 247 (ISVQDVSKKL…SENSITNELF (239 aa)) folds into the ABC transporter domain. 41–48 (GHSGSGKT) is a binding site for ATP.

This sequence belongs to the ABC transporter superfamily. Methionine importer (TC 3.A.1.24) family. As to quaternary structure, the complex is composed of two ATP-binding proteins (MetN), two transmembrane proteins (MetI) and a solute-binding protein (MetQ).

It is found in the cell inner membrane. The catalysed reaction is L-methionine(out) + ATP + H2O = L-methionine(in) + ADP + phosphate + H(+). The enzyme catalyses D-methionine(out) + ATP + H2O = D-methionine(in) + ADP + phosphate + H(+). Functionally, part of the ABC transporter complex MetNIQ involved in methionine import. Responsible for energy coupling to the transport system. The chain is Methionine import ATP-binding protein MetN from Chlamydia pneumoniae (Chlamydophila pneumoniae).